Here is a 354-residue protein sequence, read N- to C-terminus: UDP-N-acetylglucosamine--N-acetylmuramyl-(pentapeptide) pyrophosphoryl-undecaprenol N-acetylglucosamine transferase (354 aa).

UDP-N-acetyl-alpha-D-glucosamine is bound by residues Thr11–Gly13, Arg164, Ser194, and Gln289.

Belongs to the glycosyltransferase 28 family. MurG subfamily.

It localises to the cell membrane. The enzyme catalyses di-trans,octa-cis-undecaprenyl diphospho-N-acetyl-alpha-D-muramoyl-L-alanyl-D-glutamyl-meso-2,6-diaminopimeloyl-D-alanyl-D-alanine + UDP-N-acetyl-alpha-D-glucosamine = di-trans,octa-cis-undecaprenyl diphospho-[N-acetyl-alpha-D-glucosaminyl-(1-&gt;4)]-N-acetyl-alpha-D-muramoyl-L-alanyl-D-glutamyl-meso-2,6-diaminopimeloyl-D-alanyl-D-alanine + UDP + H(+). It functions in the pathway cell wall biogenesis; peptidoglycan biosynthesis. Cell wall formation. Catalyzes the transfer of a GlcNAc subunit on undecaprenyl-pyrophosphoryl-MurNAc-pentapeptide (lipid intermediate I) to form undecaprenyl-pyrophosphoryl-MurNAc-(pentapeptide)GlcNAc (lipid intermediate II). The sequence is that of UDP-N-acetylglucosamine--N-acetylmuramyl-(pentapeptide) pyrophosphoryl-undecaprenol N-acetylglucosamine transferase from Clostridium botulinum (strain Loch Maree / Type A3).